Consider the following 195-residue polypeptide: Molybdenum cofactor guanylyltransferase (195 aa).

Residues 10–12 (LAG), K23, N51, D69, and D99 each bind GTP. D99 provides a ligand contact to Mg(2+).

It belongs to the MobA family. In terms of assembly, monomer. It depends on Mg(2+) as a cofactor.

The protein resides in the cytoplasm. It carries out the reaction Mo-molybdopterin + GTP + H(+) = Mo-molybdopterin guanine dinucleotide + diphosphate. In terms of biological role, transfers a GMP moiety from GTP to Mo-molybdopterin (Mo-MPT) cofactor (Moco or molybdenum cofactor) to form Mo-molybdopterin guanine dinucleotide (Mo-MGD) cofactor. This is Molybdenum cofactor guanylyltransferase from Histophilus somni (strain 2336) (Haemophilus somnus).